Here is a 648-residue protein sequence, read N- to C-terminus: Shugoshin (648 aa).

Coiled-coil stretches lie at residues 95–122 and 208–273; these read LMIK…RLSV and DDRA…KDEA. Disordered regions lie at residues 188–239, 262–334, 367–443, 483–518, and 628–648; these read KVVG…RSSR, EADK…QEDA, VYRD…RPRR, TNRK…AAED, and HRAR…KVST. 2 stretches are compositionally biased toward basic and acidic residues: residues 200-217 and 262-273; these read VRGE…HQEA and EADKSRSAKDEA. A compositionally biased stretch (polar residues) spans 306–315; it reads ASGTLTQSNE. Basic and acidic residues-rich tracts occupy residues 424-440 and 490-509; these read IVVD…DATR and QREG…HEQD.

Belongs to the shugoshin family.

Its subcellular location is the nucleus. It is found in the chromosome. The protein localises to the centromere. Its function is as follows. Plays a central role in chromosome cohesion during cell division by preventing premature dissociation of cohesin complex from centromeres after prophase, when most of cohesin complex dissociates from chromosomes arms. May act by protecting RAD21 and or REC8 from cleavage by ESP1/separase. In Eremothecium gossypii (strain ATCC 10895 / CBS 109.51 / FGSC 9923 / NRRL Y-1056) (Yeast), this protein is Shugoshin (SGO1).